A 364-amino-acid polypeptide reads, in one-letter code: uncharacterized protein (364 aa).

3 consecutive transmembrane segments (helical) span residues 41 to 61 (NIFT…FFGL), 298 to 318 (VIYI…ITYM), and 329 to 349 (LLFY…SIII).

Its subcellular location is the membrane. This is an uncharacterized protein from Mycoplasma capricolum subsp. capricolum (strain California kid / ATCC 27343 / NCTC 10154).